Reading from the N-terminus, the 221-residue chain is MLNRMYRYALLATVALALSGCILPGEQKPAPVEEAQPGTQQPTQPVPPPTQPVPTVPSVPSIPAQPGPIEHQPENATPEPKARTYDWNSAMAPMVGKMLQADGVNAGSVLLVDSVNNRTNGSLQTGPATEALRGALANNAKFTLVSAQQLSMAKQQLGLSPQDSLGSRSKAIGIARNVGAQYVLYANASGNVNAPTLQMQLMLVQTGEIIWSGKGAVQQTQ.

Positions 1–20 (MLNRMYRYALLATVALALSG) are cleaved as a signal peptide. Residue Cys-21 is the site of N-palmitoyl cysteine attachment. Cys-21 is lipidated: S-diacylglycerol cysteine. A disordered region spans residues 29–82 (PAPVEEAQPGTQQPTQPVPPPTQPVPTVPSVPSIPAQPGPIEHQPENATPEPKA). Positions 44–57 (QPVPPPTQPVPTVP) are enriched in pro residues.

This sequence belongs to the LpoB family. As to quaternary structure, interacts with PBP1b.

It is found in the cell outer membrane. In terms of biological role, regulator of peptidoglycan synthesis that is essential for the function of penicillin-binding protein 1B (PBP1b). The protein is Penicillin-binding protein activator LpoB of Cronobacter turicensis (strain DSM 18703 / CCUG 55852 / LMG 23827 / z3032).